The sequence spans 223 residues: Neurotrophic factor BDNF precursor form (223 aa).

Residues 1–5 (SCMKA) form the signal peptide. Positions 6–114 (APMKEVSIRG…AANMSMRVRR (109 aa)) are excised as a propeptide. N-linked (GlcNAc...) asparagine glycosylation is present at Asn-107. Intrachain disulfides connect Cys-127–Cys-194 and Cys-172–Cys-223.

Belongs to the NGF-beta family.

Its subcellular location is the secreted. Promotes the survival of neuronal populations that are all located either in the central nervous system or directly connected to it. In Chilabothrus striatus (Haitian boa constrictor), this protein is Neurotrophic factor BDNF precursor form (BDNF).